The primary structure comprises 336 residues: ATP-dependent 6-phosphofructokinase (336 aa).

Residue Gly-11 participates in ATP binding. 21–25 (RAVVR) provides a ligand contact to ADP. ATP-binding positions include 72–73 (RY) and 102–105 (GDGS). Asp-103 serves as a coordination point for Mg(2+). 125–127 (TID) serves as a coordination point for substrate. The Proton acceptor role is filled by Asp-127. Arg-154 contributes to the ADP binding site. Residues Arg-162 and 169–171 (MGR) each bind substrate. ADP-binding positions include 185–187 (GAD), Lys-211, and 213–215 (KKH). Substrate is bound by residues Glu-222, Arg-244, and 250–253 (HIQR).

This sequence belongs to the phosphofructokinase type A (PFKA) family. ATP-dependent PFK group I subfamily. Prokaryotic clade 'B1' sub-subfamily. Homotetramer. Mg(2+) serves as cofactor.

Its subcellular location is the cytoplasm. It catalyses the reaction beta-D-fructose 6-phosphate + ATP = beta-D-fructose 1,6-bisphosphate + ADP + H(+). It participates in carbohydrate degradation; glycolysis; D-glyceraldehyde 3-phosphate and glycerone phosphate from D-glucose: step 3/4. Its activity is regulated as follows. Allosterically activated by ADP and other diphosphonucleosides, and allosterically inhibited by phosphoenolpyruvate. Functionally, catalyzes the phosphorylation of D-fructose 6-phosphate to fructose 1,6-bisphosphate by ATP, the first committing step of glycolysis. The protein is ATP-dependent 6-phosphofructokinase of Streptococcus sanguinis (strain SK36).